The following is a 396-amino-acid chain: tRNA (guanine-N(7)-)-methyltransferase (396 aa).

S-adenosyl-L-methionine is bound by residues glutamate 125, glutamate 150, and aspartate 177. Residues lysine 203 and aspartate 233 each contribute to the substrate site.

It belongs to the class I-like SAM-binding methyltransferase superfamily. TrmB family.

It catalyses the reaction guanosine(46) in tRNA + S-adenosyl-L-methionine = N(7)-methylguanosine(46) in tRNA + S-adenosyl-L-homocysteine. It functions in the pathway tRNA modification; N(7)-methylguanine-tRNA biosynthesis. Its function is as follows. Catalyzes the formation of N(7)-methylguanine at position 46 (m7G46) in tRNA. In Helicobacter hepaticus (strain ATCC 51449 / 3B1), this protein is tRNA (guanine-N(7)-)-methyltransferase.